The following is a 942-amino-acid chain: UvrABC system protein A (942 aa).

Residue Gly32–Ser39 coordinates ATP. A C4-type zinc finger spans residues Cys251–Cys278. 2 consecutive ABC transporter domains span residues Trp308–Ile589 and Gly609–Lys937. An ATP-binding site is contributed by Gly641–Ser648. A C4-type zinc finger spans residues Cys740–Cys766.

This sequence belongs to the ABC transporter superfamily. UvrA family. In terms of assembly, forms a heterotetramer with UvrB during the search for lesions.

The protein resides in the cytoplasm. The UvrABC repair system catalyzes the recognition and processing of DNA lesions. UvrA is an ATPase and a DNA-binding protein. A damage recognition complex composed of 2 UvrA and 2 UvrB subunits scans DNA for abnormalities. When the presence of a lesion has been verified by UvrB, the UvrA molecules dissociate. The protein is UvrABC system protein A of Streptococcus pyogenes serotype M6 (strain ATCC BAA-946 / MGAS10394).